The following is a 383-amino-acid chain: F-box/kelch-repeat protein At1g16250 (383 aa).

The F-box domain maps to 7–54 (SIIPGLPDDLALRCIAKLSHGYHGVLECVSRGWRDLVRGADYSCYKAR). Kelch repeat units lie at residues 50 to 103 (CYKA…GFAC), 109 to 165 (CLLV…SVSG), 166 to 214 (KVYV…SYRG), 216 to 263 (FHVL…VMKN), and 318 to 377 (ELYV…CVSL).

This Arabidopsis thaliana (Mouse-ear cress) protein is F-box/kelch-repeat protein At1g16250.